Consider the following 396-residue polypeptide: Putative nickel insertion protein (396 aa).

It belongs to the LarC family.

This is Putative nickel insertion protein from Methanosarcina acetivorans (strain ATCC 35395 / DSM 2834 / JCM 12185 / C2A).